Here is a 122-residue protein sequence, read N- to C-terminus: Basic phospholipase A2 Cdr-12 (122 aa).

7 cysteine pairs are disulfide-bonded: C26–C115, C28–C44, C43–C95, C49–C122, C50–C88, C57–C81, and C75–C86. Ca(2+) contacts are provided by Y27, G29, and G31. Residue H47 is part of the active site. D48 serves as a coordination point for Ca(2+). The active site involves D89.

It depends on Ca(2+) as a cofactor. As to expression, expressed by the venom gland.

The protein resides in the secreted. It catalyses the reaction a 1,2-diacyl-sn-glycero-3-phosphocholine + H2O = a 1-acyl-sn-glycero-3-phosphocholine + a fatty acid + H(+). Its function is as follows. Snake venom phospholipase A2 (PLA2) that induces myonecrosis and edema upon intramuscular injections in mice. In vitro, causes a potent blockade of neuromuscular transmission in young chicken biventer cervicis preparation and produces cytotoxicity in murine C2C12 skeletal muscle myotubes and lack cytolytic activity upon myoblasts in vitro. PLA2 catalyzes the calcium-dependent hydrolysis of the 2-acyl groups in 3-sn-phosphoglycerides. This chain is Basic phospholipase A2 Cdr-12, found in Crotalus durissus ruruima (South American rattlesnake).